A 347-amino-acid polypeptide reads, in one-letter code: Iron-sulfur cluster assembly protein SufC (347 aa).

Residues 100-346 (LEIKDLHAIE…ENKGYSQFLK (247 aa)) enclose the ABC transporter domain. Residue 134 to 141 (GRNGSGKS) coordinates ATP.

This sequence belongs to the ABC transporter superfamily. Ycf16 family. In terms of assembly, component of a complex composed of SufB, SufC and SufD in a stoichiometric ratio of 1:2:1. Interacts with SufB. Interacts with SufD; the interaction enhances the ATPase activity of SufC. In terms of processing, proteolytically cleaved.

The protein resides in the plastid. It localises to the apicoplast. It carries out the reaction ATP + H2O = ADP + phosphate + H(+). It participates in cofactor biosynthesis; iron-sulfur cluster biosynthesis. Participates in the sulfur mobilization (SUF) pathway for iron-sulfur (Fe-S) cluster biogenesis. As part of a complex consisting of SufB-SufC(2)-SufD, involved in assembly of [4Fe-4S] clusters. Exhibits ATPase activity. This Plasmodium falciparum (isolate 3D7) protein is Iron-sulfur cluster assembly protein SufC.